We begin with the raw amino-acid sequence, 449 residues long: L-lysine-epsilon aminotransferase (449 aa).

The pyridoxal 5'-phosphate site is built by glycine 128 and alanine 129. The 2-oxoglutarate site is built by arginine 170 and glutamine 274. Arginine 170 lines the L-lysine pocket. Pyridoxal 5'-phosphate is bound at residue glutamine 274. Lysine 300 is subject to N6-(pyridoxal phosphate)lysine. A 2-oxoglutarate-binding site is contributed by arginine 422.

The protein belongs to the class-III pyridoxal-phosphate-dependent aminotransferase family. Requires pyridoxal 5'-phosphate as cofactor.

The catalysed reaction is L-lysine + 2-oxoglutarate = (S)-2-amino-6-oxohexanoate + L-glutamate. Functionally, catalyzes the transfer of the terminal amino group of L-lysine to alpha-ketoglutarate to yield L-glutamate and 2-aminoadipate 6-semialdehyde ((S)-2-amino-6-oxohexanoate), which is spontaneously converted to the dehydrated form 1-piperideine 6-carboxylate. This Mycobacterium bovis (strain ATCC BAA-935 / AF2122/97) protein is L-lysine-epsilon aminotransferase.